A 53-amino-acid polypeptide reads, in one-letter code: Rubredoxin (53 aa).

Residues 1–53 (MQKYVCDICGYVYDPAVGDPDNGVAPGTAFADLPEDWVCPECGVSKDEFSPEA) form the Rubredoxin-like domain. Cys-6, Cys-9, Cys-39, and Cys-42 together coordinate Fe cation.

Belongs to the rubredoxin family. Fe(3+) serves as cofactor.

Rubredoxin is a small nonheme, iron protein lacking acid-labile sulfide. Its single Fe, chelated to 4 Cys, functions as an electron acceptor and may also stabilize the conformation of the molecule. This Butyribacterium methylotrophicum protein is Rubredoxin.